Here is a 216-residue protein sequence, read N- to C-terminus: 3-keto-L-gulonate-6-phosphate decarboxylase UlaD (216 aa).

Residue D11 coordinates substrate. E33 and D62 together coordinate Mg(2+). R192 is a substrate binding site.

It belongs to the HPS/KGPDC family. KGPDC subfamily. As to quaternary structure, homodimer. Requires Mg(2+) as cofactor.

It catalyses the reaction 3-dehydro-L-gulonate 6-phosphate + H(+) = L-xylulose 5-phosphate + CO2. It functions in the pathway cofactor degradation; L-ascorbate degradation; D-xylulose 5-phosphate from L-ascorbate: step 2/4. Catalyzes the decarboxylation of 3-keto-L-gulonate-6-P into L-xylulose-5-P. Is involved in the anaerobic L-ascorbate utilization. This Salmonella choleraesuis (strain SC-B67) protein is 3-keto-L-gulonate-6-phosphate decarboxylase UlaD.